The sequence spans 503 residues: MVLEMLNPMHFNITTMVPAAMPAATMPILLLTCLLLLIWNYEGTSSIPGPGYCMGIGPLISYARFLWMGIGSACNYYNKMYGEFIRVWICGEETLIISKSSSMFHVMKHSHYVSRFGSKPGLQCIGMHENGIIFNNNPALWKVVRPFFMKALTGPGLVQMVAICVGSIGRHLDKLEEVTTRSGCVDVLTLMRRIMLDTSNTLFLGIPMDESAIVVKIQGYFDAWQALLLKPNIFFKISWLYKKYEKSVKDLKDAIDILVEKKRRRISTAEKLEDHMDFATNLIFAEKRGDLTRENVNQCVLEMLIAAPDTMSVSVFFMLFLIAKHPSVEEAIMEEIQTVVGERDIRIDDIQKLKVVENFIYESMRYQPVVDLVMRKALEDDVIDGYPVKKGTNIILNIGRMHRLEFFPKPNEFTLENFAKNVPYRYFQPFGFGPRGCAGKYIAMVMMKVILVTLLRRFQVKALQGRSVENIQKKNDLSLHPDETSDLLEMIFTPRNSDTCLGQ.

Cys-437 serves as a coordination point for heme.

Belongs to the cytochrome P450 family. The cofactor is heme.

The protein localises to the membrane. It catalyses the reaction testosterone + 3 reduced [NADPH--hemoprotein reductase] + 3 O2 = 17beta-estradiol + formate + 3 oxidized [NADPH--hemoprotein reductase] + 4 H2O + 4 H(+). The enzyme catalyses androst-4-ene-3,17-dione + 3 reduced [NADPH--hemoprotein reductase] + 3 O2 = estrone + formate + 3 oxidized [NADPH--hemoprotein reductase] + 4 H2O + 4 H(+). Its function is as follows. Catalyzes the formation of aromatic C18 estrogens from C19 androgens. In Oryctolagus cuniculus (Rabbit), this protein is Aromatase (CYP19A1).